We begin with the raw amino-acid sequence, 248 residues long: Probable transcriptional regulatory protein Smed_2641 (248 aa).

Belongs to the TACO1 family.

It is found in the cytoplasm. The protein is Probable transcriptional regulatory protein Smed_2641 of Sinorhizobium medicae (strain WSM419) (Ensifer medicae).